A 405-amino-acid chain; its full sequence is Cystathionine gamma-lyase (405 aa).

Residues R62, Y114, and R119 each coordinate substrate. At K212 the chain carries N6-(pyridoxal phosphate)lysine. E339 serves as a coordination point for substrate.

It belongs to the trans-sulfuration enzymes family. Homotetramer. Interacts with CALM in a calcium-dependent manner. The cofactor is pyridoxal 5'-phosphate. Highly expressed in liver. Also in muscle and lower expression in most tissues except heart, pituitary gland, spleen, thymus, and vascular tissue, where it is hardly detected.

Its subcellular location is the cytoplasm. The catalysed reaction is L,L-cystathionine + H2O = 2-oxobutanoate + L-cysteine + NH4(+). It catalyses the reaction L-cysteine + H2O = hydrogen sulfide + pyruvate + NH4(+) + H(+). It carries out the reaction L-homocysteine + H2O = 2-oxobutanoate + hydrogen sulfide + NH4(+) + H(+). The enzyme catalyses L-homoserine = 2-oxobutanoate + NH4(+). The catalysed reaction is L-selenocystathionine + H2O = L-selenocysteine + 2-oxobutanoate + NH4(+). It participates in amino-acid biosynthesis; L-cysteine biosynthesis; L-cysteine from L-homocysteine and L-serine: step 2/2. Inhibited by propargylglycine, trifluoroalanine and aminoethoxyvinylglycine. In terms of biological role, catalyzes the last step in the trans-sulfuration pathway from L-methionine to L-cysteine in a pyridoxal-5'-phosphate (PLP)-dependent manner, which consists on cleaving the L,L-cystathionine molecule into L-cysteine, ammonia and 2-oxobutanoate. Part of the L-cysteine derived from the trans-sulfuration pathway is utilized for biosynthesis of the ubiquitous antioxidant glutathione. Besides its role in the conversion of L-cystathionine into L-cysteine, it utilizes L-cysteine and L-homocysteine as substrates (at much lower rates than L,L-cystathionine) to produce the endogenous gaseous signaling molecule hydrogen sulfide (H2S). In vitro, it converts two L-cysteine molecules into lanthionine and H2S, also two L-homocysteine molecules to homolanthionine and H2S, which can be particularly relevant under conditions of severe hyperhomocysteinemia (which is a risk factor for cardiovascular disease, diabetes, and Alzheimer's disease). Lanthionine and homolanthionine are structural homologs of L,L-cystathionine that differ by the absence or presence of an extra methylene group, respectively. Acts as a cysteine-protein sulfhydrase by mediating sulfhydration of target proteins: sulfhydration consists of converting -SH groups into -SSH on specific cysteine residues of target proteins such as GAPDH, PTPN1 and NF-kappa-B subunit RELA, thereby regulating their function. By generating the gasotransmitter H2S, it participates in a number of physiological processes such as vasodilation, bone protection, and inflammation. Plays an essential role in myogenesis by contributing to the biogenesis of H2S in skeletal muscle tissue. Can also accept homoserine as substrate. Catalyzes the elimination of selenocystathionine (which can be derived from the diet) to yield selenocysteine, ammonia and 2-oxobutanoate. In Homo sapiens (Human), this protein is Cystathionine gamma-lyase (CTH).